Here is a 504-residue protein sequence, read N- to C-terminus: 26S proteasome non-ATPase regulatory subunit 5 (504 aa).

A2 is subject to N-acetylalanine.

It belongs to the proteasome subunit S5B/HSM3 family. As to quaternary structure, interacts with PSMC1, PSMC2, PSMD1 and PSMD6. Part of transient complex containing PSMD5, PSMC2, PSMC1 and PSMD2 formed during the assembly of the 26S proteasome.

Its function is as follows. Acts as a chaperone during the assembly of the 26S proteasome, specifically of the base subcomplex of the PA700/19S regulatory complex (RC). In the initial step of the base subcomplex assembly is part of an intermediate PSMD5:PSMC2:PSMC1:PSMD2 module which probably assembles with a PSMD10:PSMC4:PSMC5:PAAF1 module followed by dissociation of PSMD5. The polypeptide is 26S proteasome non-ATPase regulatory subunit 5 (Psmd5) (Mus musculus (Mouse)).